We begin with the raw amino-acid sequence, 125 residues long: Large ribosomal subunit protein bL12 (125 aa).

This sequence belongs to the bacterial ribosomal protein bL12 family. Homodimer. Part of the ribosomal stalk of the 50S ribosomal subunit. Forms a multimeric L10(L12)X complex, where L10 forms an elongated spine to which 2 to 4 L12 dimers bind in a sequential fashion. Binds GTP-bound translation factors.

Functionally, forms part of the ribosomal stalk which helps the ribosome interact with GTP-bound translation factors. Is thus essential for accurate translation. This chain is Large ribosomal subunit protein bL12, found in Francisella tularensis subsp. holarctica (strain FTNF002-00 / FTA).